The following is a 587-amino-acid chain: Glutaconyl-CoA decarboxylase subunit alpha (587 aa).

In terms of domain architecture, CoA carboxyltransferase N-terminal spans L31–D298. The segment at L31–A558 is carboxyltransferase. The 264-residue stretch at R295–A558 folds into the CoA carboxyltransferase C-terminal domain.

Heterooctamer consisting of two alpha, two beta, two gamma and two delta subunits.

The catalysed reaction is (2E)-glutaconyl-CoA + Na(+)(in) + H(+) = (2E)-butenoyl-CoA + Na(+)(out) + CO2. The protein operates within amino-acid degradation; L-glutamate degradation via hydroxyglutarate pathway; crotonoyl-CoA from L-glutamate: step 5/5. In terms of biological role, decarboxylase subunit of the primary sodium pump glutaconyl-CoA decarboxylase (GCD). The sequence is that of Glutaconyl-CoA decarboxylase subunit alpha (gcdA) from Acidaminococcus fermentans (strain ATCC 25085 / DSM 20731 / CCUG 9996 / CIP 106432 / VR4).